Consider the following 417-residue polypeptide: uncharacterized protein (417 aa).

Residues 10-30 traverse the membrane as a helical segment; that stretch reads ALVCFSILSILVLACGCVNTP. The tract at residues 84–106 is disordered; the sequence is QENHPLQSNQNYEQTNGNFNEEN. Over residues 86–106 the composition is skewed to polar residues; it reads NHPLQSNQNYEQTNGNFNEEN. A helical transmembrane segment spans residues 148–168; sequence LYYIKVIDPIVGGLAGIDIYV.

It is found in the cell membrane. This is an uncharacterized protein from Methanocaldococcus jannaschii (strain ATCC 43067 / DSM 2661 / JAL-1 / JCM 10045 / NBRC 100440) (Methanococcus jannaschii).